The sequence spans 198 residues: MAQINPLPVPLGPWKITVYDQENFQGKRMEFTSSCTNIMECGFDNIRSLKVECGAWIGYEHTSFCGQQFVLERGEYPPWDAWSATNAYHIERLMSFRPICSANHKESKLVIFEKENFIGRQWELRDDYPSLQAMGWGNNEVGSMKVQCGAWVCYQYPGYRGYQYILESDHHGGEYKHWREWGSHAQTFQIQSIRRIQQ.

The tract at residues 1–13 is N-terminal arm; sequence MAQINPLPVPLGP. Beta/gamma crystallin 'Greek key' domains follow at residues 14–53 and 54–100; these read WKIT…KVEC and GAWI…RPIC. A connecting peptide region spans residues 101–106; that stretch reads SANHKE. 2 Beta/gamma crystallin 'Greek key' domains span residues 107 to 148 and 149 to 197; these read SKLV…KVQC and GAWV…RRIQ.

It belongs to the beta/gamma-crystallin family. Homo/heterodimer, or complexes of higher-order. The structure of beta-crystallin oligomers seems to be stabilized through interactions between the N-terminal arms. The N-terminus is blocked.

Its function is as follows. Crystallins are the dominant structural components of the vertebrate eye lens. In Aquarana catesbeiana (American bullfrog), this protein is Beta-crystallin A1-1.